Consider the following 571-residue polypeptide: Alpha-1D adrenergic receptor (571 aa).

The Extracellular segment spans residues 1 to 94 (MTFRDLLSVN…AVGGLVVSAQ (94 aa)). The tract at residues 13-75 (GSRSDGSAGG…SSAGEPGAAG (63 aa)) is disordered. Over residues 19–34 (SAGGASAGGSGGGSGG) the composition is skewed to gly residues. Residues 35–47 (AAASEGRAVDGVP) are compositionally biased toward low complexity. Positions 48-57 (GTAGSGGVVG) are enriched in gly residues. Residues asparagine 64 and asparagine 81 are each glycosylated (N-linked (GlcNAc...) asparagine). The helical transmembrane segment at 95–120 (GVGVGVFLAAFILMAVAGNLLVILSV) threads the bilayer. Over 121–132 (ACNRHLQTVTNY) the chain is Cytoplasmic. The helical transmembrane segment at 133-158 (FIVNLAVADLLLSATVLPFSATMEVL) threads the bilayer. The Extracellular segment spans residues 159–168 (GFWAFGRAFC). Residues 169–191 (DVWAAVDVLCCTASILSLCTISV) traverse the membrane as a helical segment. At 192–212 (DRYVGVRHSLKYPSIMTERKA) the chain is on the cytoplasmic side. Residues 213–237 (AAILALLWAVAIVVSVGPLLGWKEP) form a helical membrane-spanning segment. The Extracellular portion of the chain corresponds to 238–250 (VPPDERFCGITEE). Residues 251 to 274 (AGYAVFSSLCSFYLPMAVIVVMYC) form a helical membrane-spanning segment. The Cytoplasmic segment spans residues 275–348 (RVYVVARSTT…KFSREKKAAK (74 aa)). The helical transmembrane segment at 349-373 (TLAIVVGVFVLCWFPFFFVLPLGSL) threads the bilayer. Residues 374 to 380 (FPQLKPS) are Extracellular-facing. The chain crosses the membrane as a helical span at residues 381 to 405 (EGVFKVIFWLGYFNSCVNPLIYPCS). At 406-571 (SREFKRAFLR…DYSHLRETDI (166 aa)) the chain is on the cytoplasmic side. Cysteine 419 carries the S-palmitoyl cysteine lipid modification. The segment at 465–487 (LPAPEATDTPSAPEAQAPVVGRR) is disordered.

It belongs to the G-protein coupled receptor 1 family. Adrenergic receptor subfamily. ADRA1D sub-subfamily. As to quaternary structure, interacts with FLNA (via filamin repeat 21); increases PKA-mediated phosphorylation of FLNA. In terms of processing, palmitoylated. Palmitoylation by ZDHHC21 may increase the expression of the receptor and regulate downstream signaling.

The protein resides in the cell membrane. Its function is as follows. This alpha-adrenergic receptor mediates its effect through the influx of extracellular calcium. The protein is Alpha-1D adrenergic receptor (ADRA1D) of Sus scrofa (Pig).